A 195-amino-acid polypeptide reads, in one-letter code: PBAN-type neuropeptides (195 aa).

The N-terminal stretch at 1–33 is a signal peptide; that stretch reads MIGFAVFSSFNRFTTIFVCVLLCVVYLLSYASG. Residues 34–63 constitute a propeptide that is removed on maturation; sequence EYDGRDSSSGSNNDRAPSNEFGSCTDGKCI. Leu-80 bears the Leucine amide mark. A propeptide spanning residues 86 to 117 is cleaved from the precursor; sequence ADRKPEINSDIEAFANAFEEPHWAIVTIPETE. At Gln-120 the chain carries Pyrrolidone carboxylic acid. The residue at position 128 (Leu-128) is a Leucine amide. The propeptide occupies 131–153; that stretch reads ESGEDYFSYGFPKDQEELYTEEQ. Residues Leu-163 and Leu-175 each carry the leucine amide modification. A propeptide spanning residues 178-195 is cleaved from the precursor; sequence QLHNIVDKPRQNFNDPRF.

This sequence belongs to the pyrokinin family.

It localises to the secreted. Functionally, a hormone that controls sex pheromone production in females and pheromone responsiveness in male. Also mediates visceral muscle contractile activity (myotropic activity). This is PBAN-type neuropeptides from Apis mellifera (Honeybee).